Reading from the N-terminus, the 488-residue chain is 3-octaprenyl-4-hydroxybenzoate carboxy-lyase (488 aa).

Residue asparagine 172 coordinates Mn(2+). Residues 175 to 177 (IYR), 189 to 191 (RWL), and 194 to 195 (RG) each bind prenylated FMN. Glutamate 238 is a binding site for Mn(2+). Residue aspartate 287 is the Proton donor of the active site.

This sequence belongs to the UbiD family. Homohexamer. Prenylated FMN is required as a cofactor. Requires Mn(2+) as cofactor.

It is found in the cell membrane. It carries out the reaction a 4-hydroxy-3-(all-trans-polyprenyl)benzoate + H(+) = a 2-(all-trans-polyprenyl)phenol + CO2. Its pathway is cofactor biosynthesis; ubiquinone biosynthesis. Catalyzes the decarboxylation of 3-octaprenyl-4-hydroxy benzoate to 2-octaprenylphenol, an intermediate step in ubiquinone biosynthesis. The polypeptide is 3-octaprenyl-4-hydroxybenzoate carboxy-lyase (Pseudomonas syringae pv. tomato (strain ATCC BAA-871 / DC3000)).